Reading from the N-terminus, the 65-residue chain is Kunitz-type serine protease inhibitor IX (65 aa).

The BPTI/Kunitz inhibitor domain occupies 7-57 (CNLLPETGRCNALIPAFYYNSHLHKCQKFNYGGCGGNANNFKTIDECQRTC). Cystine bridges form between Cys7–Cys57, Cys16–Cys40, and Cys32–Cys53.

Belongs to the venom Kunitz-type family. In terms of tissue distribution, expressed by the venom gland.

It is found in the secreted. Dual-function toxin that inhibits both serine proteases (high activity on chymotrypsin (Ki = 18 nM), and low activity on elastase) and voltage-gated potassium channels Kv1.3/KCNA3 (IC(50) = 120.0 nM). The sequence is that of Kunitz-type serine protease inhibitor IX from Bungarus fasciatus (Banded krait).